The chain runs to 200 residues: Imidazoleglycerol-phosphate dehydratase (200 aa).

The protein belongs to the imidazoleglycerol-phosphate dehydratase family.

It localises to the cytoplasm. The enzyme catalyses D-erythro-1-(imidazol-4-yl)glycerol 3-phosphate = 3-(imidazol-4-yl)-2-oxopropyl phosphate + H2O. The protein operates within amino-acid biosynthesis; L-histidine biosynthesis; L-histidine from 5-phospho-alpha-D-ribose 1-diphosphate: step 6/9. The chain is Imidazoleglycerol-phosphate dehydratase from Renibacterium salmoninarum (strain ATCC 33209 / DSM 20767 / JCM 11484 / NBRC 15589 / NCIMB 2235).